The primary structure comprises 615 residues: Coagulation factor XII (615 aa).

The first 19 residues, Met-1–Ser-19, serve as a signal peptide directing secretion. A Fibronectin type-II domain is found at Val-42–Glu-90. Cystine bridges form between Cys-47–Cys-73, Cys-61–Cys-88, Cys-98–Cys-110, Cys-104–Cys-119, Cys-121–Cys-130, Cys-135–Cys-163, Cys-161–Cys-170, Cys-178–Cys-189, Cys-183–Cys-198, Cys-200–Cys-209, Cys-217–Cys-295, Cys-238–Cys-277, and Cys-266–Cys-290. Residues Val-94–Gln-131 enclose the EGF-like 1 domain. Thr-109 is a glycosylation site (O-linked (Fuc) threonine). Residues Glu-133–Leu-173 form the Fibronectin type-I domain. The 37-residue stretch at Ala-174–Asp-210 folds into the EGF-like 2 domain. Residues Cys-217–Cys-295 form the Kringle domain. Asn-249 carries an N-linked (GlcNAc...) asparagine glycan. The disordered stretch occupies residues Pro-298–Cys-359. Thr-299 and Thr-305 each carry an O-linked (GalNAc...) threonine glycan. A glycan (O-linked (GalNAc...) serine) is linked at Ser-308. Pro residues predominate over residues Pro-317–Gln-326. Residues Pro-327–Pro-338 show a composition bias toward low complexity. 3 O-linked (GalNAc...) threonine glycosylation sites follow: Thr-328, Thr-329, and Thr-337. Disulfide bonds link Cys-359–Cys-486, Cys-397–Cys-413, Cys-405–Cys-475, Cys-436–Cys-439, Cys-500–Cys-569, Cys-532–Cys-548, and Cys-559–Cys-590. In terms of domain architecture, Peptidase S1 spans Val-373–Val-614. His-412 (charge relay system) is an active-site residue. Residue Asn-433 is glycosylated (N-linked (GlcNAc...) asparagine). The active-site Charge relay system is the Asp-461. Residue Ser-563 is the Charge relay system of the active site.

It belongs to the peptidase S1 family. As to quaternary structure, interacts with HRG; the interaction, which is enhanced in the presence of zinc ions and inhibited by heparin-binding, inhibits factor XII autoactivation and contact-initiated coagulation. Interacts (inactive and activated) with D7L2, an anticoagulant protein from Anopheles gambiae. Interacts (activated) with iripin-8, a serine protease inhibitor from Ixodes ricinus saliva. Interacts (inactive and activated) (via amino acids 1-77) with triafestin-1 and triafestin-2, anticoagulant proteins from Triatoma infestans. Interacts (inactive and activated) (via amino acids 1-77) with short form salivary protein D7R1, an anticoagulant protein from Anopheles stephensi. Interacts (inactive and activated) (via fibronectin type II domain) with haemaphysalin, an anticoagulant protein from Haemaphysalis longicornis. Factor XII is activated by kallikrein in alpha-factor XIIa, which is further converted by trypsin into beta-factor XIIa. Alpha-factor XIIa is composed of an NH2-terminal heavy chain, called coagulation factor XIIa heavy chain, and a COOH-terminal light chain, called coagulation factor XIIa light chain, connected by a disulfide bond. Beta-factor XIIa is composed of 2 chains linked by a disulfide bond, an N-terminal nonapeptide, called beta-factor XIIa part 1, and coagulation factor XIIa light chain, also known in this context as beta-factor XIIa part 2. In terms of processing, O- and N-glycosylated. The O-linked polysaccharides were not identified, but are probably the mucin type linked to GalNAc.

It localises to the secreted. The enzyme catalyses Selective cleavage of Arg-|-Ile bonds in factor VII to form factor VIIa and factor XI to form factor XIa.. Activity is promoted in the presence of negatively charged surfaces. Its function is as follows. Factor XII is a serum glycoprotein that participates in the initiation of blood coagulation, fibrinolysis, and the generation of bradykinin and angiotensin. Prekallikrein is cleaved by factor XII to form kallikrein, which then cleaves factor XII first to alpha-factor XIIa and then trypsin cleaves it to beta-factor XIIa. Alpha-factor XIIa activates factor XI to factor XIa. This chain is Coagulation factor XII (F12), found in Homo sapiens (Human).